The chain runs to 102 residues: Small ribosomal subunit protein uS14 (102 aa).

The protein belongs to the universal ribosomal protein uS14 family. Part of the 30S ribosomal subunit. Contacts proteins S3 and S10.

Binds 16S rRNA, required for the assembly of 30S particles and may also be responsible for determining the conformation of the 16S rRNA at the A site. The polypeptide is Small ribosomal subunit protein uS14 (Wolbachia sp. subsp. Brugia malayi (strain TRS)).